The chain runs to 444 residues: MAKKYFGTDGVRGEVGQFPITPDFVLKLGYAAGQVLVQHDTDQKPTVLIGKDTRISGYMLEAALVAGFTAAGVNVIQTGPLPTPGVAYLTRALRLSAGVMISASHNAYSDNGIKFFAEGGVKLSDEIELEIEAKIDEEMKTQPSARLGRARRISGADDRYIEFCKSTFPTHSDLRGLKLVVDAANGAAYSVAPKVFHELGAQVVSIGDEPDGYNINEKCGATHTKTLQAAVLQNEADYGIALDGDGDRLMMVDKNGKVYDGDSLIYVIAKARAREGINIGGVVGTVMTNMAMEIALKEQGVDFCRAKVGDRYVLEQLNQRSWLIGGEASGHILCMDKHNTGDGIISALQVLAALQTLNQDLATVCADWQPYPQTMINVRIQKGQKWQEASKDVLAEVEKELEGKGRVVLRASGTEPVVRVMVEARQADWARDGAERIASAIGSL.

S104 serves as the catalytic Phosphoserine intermediate. Positions 104, 243, 245, and 247 each coordinate Mg(2+). S104 is modified (phosphoserine).

This sequence belongs to the phosphohexose mutase family. Requires Mg(2+) as cofactor. Activated by phosphorylation.

It catalyses the reaction alpha-D-glucosamine 1-phosphate = D-glucosamine 6-phosphate. Catalyzes the conversion of glucosamine-6-phosphate to glucosamine-1-phosphate. In Neisseria meningitidis serogroup C (strain 053442), this protein is Phosphoglucosamine mutase.